A 318-amino-acid chain; its full sequence is Ubiquitin-like domain-containing CTD phosphatase 1 (318 aa).

The Ubiquitin-like domain occupies 3-81; the sequence is VSVIIKWGGQ…IMMMGTREES (79 aa). Positions 133 to 294 constitute an FCP1 homology domain; the sequence is PRPGKRLLVL…YKLSQYLKEI (162 aa). 3 residues coordinate Mg(2+): aspartate 143, aspartate 145, and aspartate 253.

Mg(2+) is required as a cofactor.

It localises to the nucleus. The enzyme catalyses O-phospho-L-seryl-[protein] + H2O = L-seryl-[protein] + phosphate. It catalyses the reaction O-phospho-L-threonyl-[protein] + H2O = L-threonyl-[protein] + phosphate. Dephosphorylates 26S nuclear proteasomes, thereby decreasing their proteolytic activity. Recruited to the 19S regulatory particle of the 26S proteasome where it dephosphorylates 19S component psmc2 which impairs psmc2 ATPase activity and disrupts 26S proteasome assembly. Has also been reported to stimulate the proteolytic activity of the 26S proteasome. This chain is Ubiquitin-like domain-containing CTD phosphatase 1 (ublcp1), found in Danio rerio (Zebrafish).